Here is an 873-residue protein sequence, read N- to C-terminus: Bifunctional uridylyltransferase/uridylyl-removing enzyme (873 aa).

Residues 1 to 332 (MAFQSPLTFN…NGGETEPAVI (332 aa)) form a uridylyltransferase region. A uridylyl-removing region spans residues 333 to 692 (INEDFQRRGR…MSKKATRGGT (360 aa)). In terms of domain architecture, HD spans 451-573 (VDEHSVRLLN…VRDEERLEYL (123 aa)). 2 ACT domains span residues 693–773 (EVFV…VKTR) and 800–873 (LMEL…ELAP).

Belongs to the GlnD family. It depends on Mg(2+) as a cofactor.

It carries out the reaction [protein-PII]-L-tyrosine + UTP = [protein-PII]-uridylyl-L-tyrosine + diphosphate. The catalysed reaction is [protein-PII]-uridylyl-L-tyrosine + H2O = [protein-PII]-L-tyrosine + UMP + H(+). Its activity is regulated as follows. Uridylyltransferase (UTase) activity is inhibited by glutamine, while glutamine activates uridylyl-removing (UR) activity. Modifies, by uridylylation and deuridylylation, the PII regulatory proteins (GlnB and homologs), in response to the nitrogen status of the cell that GlnD senses through the glutamine level. Under low glutamine levels, catalyzes the conversion of the PII proteins and UTP to PII-UMP and PPi, while under higher glutamine levels, GlnD hydrolyzes PII-UMP to PII and UMP (deuridylylation). Thus, controls uridylylation state and activity of the PII proteins, and plays an important role in the regulation of nitrogen assimilation and metabolism. This is Bifunctional uridylyltransferase/uridylyl-removing enzyme from Vibrio vulnificus (strain YJ016).